Here is a 623-residue protein sequence, read N- to C-terminus: V-type proton ATPase catalytic subunit A (623 aa).

252–259 (GAFGCGKT) lines the ATP pocket.

The protein belongs to the ATPase alpha/beta chains family. In terms of assembly, V-ATPase is a heteromultimeric enzyme composed of a peripheral catalytic V1 complex (main components: subunits A, B, C, D, E, and F) attached to an integral membrane V0 proton pore complex (main component: the proteolipid protein).

It catalyses the reaction ATP + H2O + 4 H(+)(in) = ADP + phosphate + 5 H(+)(out). Catalytic subunit of the peripheral V1 complex of vacuolar ATPase. V-ATPase vacuolar ATPase is responsible for acidifying a variety of intracellular compartments in eukaryotic cells. This is V-type proton ATPase catalytic subunit A from Beta vulgaris (Sugar beet).